The primary structure comprises 236 residues: 3-deoxy-D-manno-octulosonic acid kinase (236 aa).

Residue D167 is part of the active site.

This sequence belongs to the protein kinase superfamily. KdkA/RfaP family.

The protein resides in the cell inner membrane. The catalysed reaction is an alpha-Kdo-(2-&gt;6)-lipid IVA + ATP = a 4-O-phospho-alpha-Kdo-(2-&gt;6)-lipid IVA + ADP + H(+). Its pathway is bacterial outer membrane biogenesis; LPS core biosynthesis. In terms of biological role, catalyzes the ATP-dependent phosphorylation of the 3-deoxy-D-manno-octulosonic acid (Kdo) residue in Kdo-lipid IV(A) at the 4-OH position. This Vibrio vulnificus (strain YJ016) protein is 3-deoxy-D-manno-octulosonic acid kinase.